A 92-amino-acid polypeptide reads, in one-letter code: Putative pterin-4-alpha-carbinolamine dehydratase (92 aa).

The protein belongs to the pterin-4-alpha-carbinolamine dehydratase family.

It catalyses the reaction (4aS,6R)-4a-hydroxy-L-erythro-5,6,7,8-tetrahydrobiopterin = (6R)-L-erythro-6,7-dihydrobiopterin + H2O. This is Putative pterin-4-alpha-carbinolamine dehydratase from Acidobacterium capsulatum (strain ATCC 51196 / DSM 11244 / BCRC 80197 / JCM 7670 / NBRC 15755 / NCIMB 13165 / 161).